The sequence spans 149 residues: Nucleoside diphosphate kinase (149 aa).

6 residues coordinate ATP: Lys9, Phe57, Arg85, Thr91, Arg102, and Asn112. Residue His115 is the Pros-phosphohistidine intermediate of the active site.

Belongs to the NDK family. In terms of assembly, homotetramer. The cofactor is Mg(2+).

The protein localises to the cytoplasm. It carries out the reaction a 2'-deoxyribonucleoside 5'-diphosphate + ATP = a 2'-deoxyribonucleoside 5'-triphosphate + ADP. The catalysed reaction is a ribonucleoside 5'-diphosphate + ATP = a ribonucleoside 5'-triphosphate + ADP. Major role in the synthesis of nucleoside triphosphates other than ATP. The ATP gamma phosphate is transferred to the NDP beta phosphate via a ping-pong mechanism, using a phosphorylated active-site intermediate. The sequence is that of Nucleoside diphosphate kinase from Trichodesmium erythraeum (strain IMS101).